The sequence spans 616 residues: MPKYRSATTTHGRNMAGARALWRATGMTDSDFGKPIIAVVNSFTQFVPGHVHLRDLGKLVAEQIEASGGVAKEFNTIAVDDGIAMGHGGMLYSLPSRELIADSVEYMVNAHCADAMVCISNCDKITPGMLMASLRLNIPVIFVSGGPMEAGKTKLSDQIIKLDLVDAMIQGADPKVSDDQSNQVERSACPTCGSCSGMFTANSMNCLTEALGLSQPGNGSLLATHADRKQLFLNAGKRIVELTKRYYEQNDESALPRNIANKAAFENAMTLDIAMGGSTNTVLHLLAAAQEAEIDFTMSDIDKLSRKVPQLCKVAPSTQKYHMEDVHRAGGVLGILGELDRAGLLNRNVKNVLGLTLPQTLEQYDITVTQDEAVKKMFRAGPAGIRTTQAFSQDCRWDSLDDDRAAGCIRSLEYAYSKDGGLAVLYGNFAENGCIVKTAGVDDSILKFTGPAKVYESQDEAVEAILGGKVVEGDVVVIRYEGPKGGPGMQEMLYPTSFLKSMGLGKACALITDGRFSGGTSGLSIGHVSPEAASGGTIALIEDGDTIAIDIPNRSIQLQLSEAEIAARREAQEARGDKAWTPKNRQRQVSFALRAYASLATSADKGAVRDKSKLGG.

Asp-81 lines the Mg(2+) pocket. Residue Cys-122 participates in [2Fe-2S] cluster binding. Residues Asp-123 and Lys-124 each contribute to the Mg(2+) site. N6-carboxylysine is present on Lys-124. Cys-195 is a binding site for [2Fe-2S] cluster. Position 491 (Glu-491) interacts with Mg(2+). The active-site Proton acceptor is Ser-517.

Belongs to the IlvD/Edd family. Homodimer. Requires [2Fe-2S] cluster as cofactor. It depends on Mg(2+) as a cofactor.

It catalyses the reaction (2R)-2,3-dihydroxy-3-methylbutanoate = 3-methyl-2-oxobutanoate + H2O. It carries out the reaction (2R,3R)-2,3-dihydroxy-3-methylpentanoate = (S)-3-methyl-2-oxopentanoate + H2O. The protein operates within amino-acid biosynthesis; L-isoleucine biosynthesis; L-isoleucine from 2-oxobutanoate: step 3/4. It functions in the pathway amino-acid biosynthesis; L-valine biosynthesis; L-valine from pyruvate: step 3/4. Functions in the biosynthesis of branched-chain amino acids. Catalyzes the dehydration of (2R,3R)-2,3-dihydroxy-3-methylpentanoate (2,3-dihydroxy-3-methylvalerate) into 2-oxo-3-methylpentanoate (2-oxo-3-methylvalerate) and of (2R)-2,3-dihydroxy-3-methylbutanoate (2,3-dihydroxyisovalerate) into 2-oxo-3-methylbutanoate (2-oxoisovalerate), the penultimate precursor to L-isoleucine and L-valine, respectively. The sequence is that of Dihydroxy-acid dehydratase from Salmonella paratyphi C (strain RKS4594).